The sequence spans 685 residues: UvrABC system protein C (685 aa).

In terms of domain architecture, GIY-YIG spans A15–I93. The 36-residue stretch at Q214–V249 folds into the UVR domain. The span at A365–H388 shows a compositional bias: low complexity. The interval A365 to R391 is disordered.

It belongs to the UvrC family. In terms of assembly, interacts with UvrB in an incision complex.

It is found in the cytoplasm. Its function is as follows. The UvrABC repair system catalyzes the recognition and processing of DNA lesions. UvrC both incises the 5' and 3' sides of the lesion. The N-terminal half is responsible for the 3' incision and the C-terminal half is responsible for the 5' incision. The polypeptide is UvrABC system protein C (Verminephrobacter eiseniae (strain EF01-2)).